A 208-amino-acid polypeptide reads, in one-letter code: Transmembrane protein 160 (208 aa).

A mitochondrion-targeting transit peptide spans 1–45 (MASIRWLMGSRLSRFVCPFAQLVRQPVLRYVRPPVRALHRGSVRR). 3 helical membrane passes run 82-102 (GFLS…IAFV), 110-130 (AGYA…ASYV), and 147-167 (VLLH…AVSL). Residues 181 to 192 (DDEEHGADESSE) are compositionally biased toward acidic residues. The segment at 181–208 (DDEEHGADESSECAECRARRDREKGQDK) is disordered. A compositionally biased stretch (basic and acidic residues) spans 194–208 (AECRARRDREKGQDK).

Belongs to the TMEM160 family.

It localises to the mitochondrion inner membrane. The sequence is that of Transmembrane protein 160 from Danio rerio (Zebrafish).